A 495-amino-acid chain; its full sequence is ESX-2 secretion system ATPase EccB2 (495 aa).

Residues 43–63 (LALSMVLVAIAAGWMMLLNVL) traverse the membrane as a helical segment.

The protein belongs to the EccB family. Part of the ESX-2 / type VII secretion system (T7SS), which is composed of cytosolic and membrane components.

The protein localises to the cell membrane. Its function is as follows. An ATPase. The protein is ESX-2 secretion system ATPase EccB2 (eccB2) of Mycobacterium tuberculosis (strain CDC 1551 / Oshkosh).